Reading from the N-terminus, the 168-residue chain is CASP-like protein 1U1 (168 aa).

The Cytoplasmic segment spans residues 1-6 (MDGAAR). The chain crosses the membrane as a helical span at residues 7–27 (AVSLFFRIAVVGLSVAAAVVM). Over 28 to 49 (ATASQAFPFNYGGAVSYTKYPA) the chain is Extracellular. A helical membrane pass occupies residues 50–70 (FVYFVVAAVVSAVCSAAALYL). The Cytoplasmic portion of the chain corresponds to 71–80 (SVVREAAAGW). The helical transmembrane segment at 81–101 (AVALLDVVTMGLLFSAAGAVF) threads the bilayer. The Extracellular segment spans residues 102 to 138 (AVRRMAPLYLGVAGADTVAGRWVNGEFCHAAGAFCWR). Residues 139-159 (VTTSAIICAFAAAAVSVAVLT) form a helical membrane-spanning segment. Topologically, residues 160–168 (KGARHRGKH) are cytoplasmic.

The protein belongs to the Casparian strip membrane proteins (CASP) family. As to quaternary structure, homodimer and heterodimers.

It localises to the cell membrane. The chain is CASP-like protein 1U1 from Oryza sativa subsp. japonica (Rice).